The following is a 498-amino-acid chain: Histidine--tRNA ligase (498 aa).

Belongs to the class-II aminoacyl-tRNA synthetase family. In terms of assembly, homodimer.

It is found in the cytoplasm. It carries out the reaction tRNA(His) + L-histidine + ATP = L-histidyl-tRNA(His) + AMP + diphosphate + H(+). In Bartonella quintana (strain Toulouse) (Rochalimaea quintana), this protein is Histidine--tRNA ligase.